The sequence spans 248 residues: Large ribosomal subunit protein uL4 (248 aa).

2 disordered regions span residues 48-95 (GTHK…GPVP) and 210-248 (AFSE…RTGA). Residues 233–248 (DATKARSSRHDDRTGA) are compositionally biased toward basic and acidic residues.

The protein belongs to the universal ribosomal protein uL4 family. As to quaternary structure, part of the 50S ribosomal subunit.

Functionally, one of the primary rRNA binding proteins, this protein initially binds near the 5'-end of the 23S rRNA. It is important during the early stages of 50S assembly. It makes multiple contacts with different domains of the 23S rRNA in the assembled 50S subunit and ribosome. Its function is as follows. Forms part of the polypeptide exit tunnel. This chain is Large ribosomal subunit protein uL4, found in Tropheryma whipplei (strain TW08/27) (Whipple's bacillus).